The chain runs to 431 residues: GDP-L-galactose phosphorylase 2 (431 aa).

His-235 acts as the Tele-GMP-histidine intermediate in catalysis. A compositionally biased stretch (acidic residues) spans 398 to 407 (EEEEEEELEE). Residues 398–417 (EEEEEEELEEQNSMNGGSFT) form a disordered region.

It belongs to the GDPGP1 family. In terms of assembly, interacts with TLP1. In terms of tissue distribution, expressed in leaves, stems, roots, flowers and siliques.

The protein localises to the cytoplasm. Its subcellular location is the nucleus. It catalyses the reaction GDP-beta-L-galactose + phosphate = beta-L-galactose 1-phosphate + GDP + H(+). The protein operates within cofactor biosynthesis; L-ascorbate biosynthesis via GDP-alpha-D-mannose pathway; L-ascorbate from GDP-alpha-D-mannose: step 2/5. Its function is as follows. Catalyzes a reaction of the Smirnoff-Wheeler pathway, the major route to ascorbate biosynthesis in plants. Acts as a phosphorylase rather than as a transferase. Uses preferentially GDP-L-galactose and GDP-D-glucose as substrates. Lower activity with GDP-L-fucose, very low activity with GDP-D-mannose, and no activity with UDP-D-glucose, UDP-D-galactose or ADP-D-glucose. Highly specific for inorganic phosphate as the guanylyl acceptor. The polypeptide is GDP-L-galactose phosphorylase 2 (VTC5) (Arabidopsis thaliana (Mouse-ear cress)).